Here is a 436-residue protein sequence, read N- to C-terminus: Transcriptional regulator STP3 (436 aa).

A disordered region spans residues E204–Q277. Over residues I230–S265 the composition is skewed to low complexity. A compositionally biased stretch (basic residues) spans T268–Q277. The C2H2-type zinc finger occupies F315 to H337.

In terms of processing, activated by the amino acid-induced proteolytic removal of an N-terminal inhibitory domain.

Its subcellular location is the cell membrane. It is found in the nucleus. Transcription factor that activates genes required for degradation of extracellular protein and uptake of peptides such as the secreted aspartyl protease SAP2 or the oligopeptide transporter OPT1. Required for virulence. Synthesized as latent cytoplasmic precursor, which, upon a signal initiated by the plasma membrane SPS amino acid sensor system (including CSY1 and CSH3), becomes proteolytically activated and relocates to the nucleus, where it induces the expression of SPS-sensor-regulated genes. The protein is Transcriptional regulator STP3 (STP3) of Candida albicans (strain SC5314 / ATCC MYA-2876) (Yeast).